The sequence spans 51 residues: Large ribosomal subunit protein bL33 (51 aa).

This sequence belongs to the bacterial ribosomal protein bL33 family.

This Alteromonas mediterranea (strain DSM 17117 / CIP 110805 / LMG 28347 / Deep ecotype) protein is Large ribosomal subunit protein bL33.